A 127-amino-acid polypeptide reads, in one-letter code: Tyrosine-protein phosphatase 2 (127 aa).

The region spanning 1–127 (QGSKVIVMVT…PRDCEAPILV (127 aa)) is the Tyrosine-protein phosphatase domain. Acidic residues predominate over residues 63 to 81 (VYDNDDGTEQNDEQTEEEP). Residues 63-82 (VYDNDDGTEQNDEQTEEEPE) are disordered.

Belongs to the protein-tyrosine phosphatase family.

The enzyme catalyses O-phospho-L-tyrosyl-[protein] + H2O = L-tyrosyl-[protein] + phosphate. This chain is Tyrosine-protein phosphatase 2 (STY-2), found in Styela plicata (Wrinkled sea squirt).